A 510-amino-acid polypeptide reads, in one-letter code: Light-independent protochlorophyllide reductase subunit B (510 aa).

Residue D36 participates in [4Fe-4S] cluster binding. D296 serves as the catalytic Proton donor. 431–432 (GM) lines the substrate pocket.

This sequence belongs to the ChlB/BchB/BchZ family. In terms of assembly, protochlorophyllide reductase is composed of three subunits; ChlL, ChlN and ChlB. Forms a heterotetramer of two ChlB and two ChlN subunits. [4Fe-4S] cluster is required as a cofactor.

Its subcellular location is the plastid. The protein resides in the chloroplast. The enzyme catalyses chlorophyllide a + oxidized 2[4Fe-4S]-[ferredoxin] + 2 ADP + 2 phosphate = protochlorophyllide a + reduced 2[4Fe-4S]-[ferredoxin] + 2 ATP + 2 H2O. It participates in porphyrin-containing compound metabolism; chlorophyll biosynthesis (light-independent). Its function is as follows. Component of the dark-operative protochlorophyllide reductase (DPOR) that uses Mg-ATP and reduced ferredoxin to reduce ring D of protochlorophyllide (Pchlide) to form chlorophyllide a (Chlide). This reaction is light-independent. The NB-protein (ChlN-ChlB) is the catalytic component of the complex. This chain is Light-independent protochlorophyllide reductase subunit B, found in Chlorokybus atmophyticus (Soil alga).